Here is a 56-residue protein sequence, read N- to C-terminus: Photosystem II reaction center X protein (56 aa).

The chain crosses the membrane as a helical span at residues 27-47 (IGSFLAAGALIVAPAAAALIW).

Belongs to the PsbX family. Type 2 subfamily. As to quaternary structure, PSII consists of a core antenna complex that captures photons, and an electron transfer chain that converts photonic excitation into a charge separation. PSII forms dimeric complexes.

The protein resides in the cellular thylakoid membrane. In terms of biological role, involved in the binding and/or turnover of quinones at the Q(B) site of Photosystem II. The polypeptide is Photosystem II reaction center X protein (Prochlorococcus marinus (strain NATL2A)).